A 77-amino-acid chain; its full sequence is Large ribosomal subunit protein eL20 (77 aa).

Belongs to the eukaryotic ribosomal protein eL20 family. In terms of assembly, part of the 50S ribosomal subunit. Binds 23S rRNA.

This chain is Large ribosomal subunit protein eL20, found in Pyrococcus abyssi (strain GE5 / Orsay).